A 208-amino-acid polypeptide reads, in one-letter code: NAD(P)H-quinone oxidoreductase subunit M, chloroplastic (208 aa).

The transit peptide at 1–21 (MAATSSYTACTKFSMLGWIGG) directs the protein to the chloroplast. Positions 37–49 (QQAEVEESQQVNA) are enriched in low complexity. Residues 37-70 (QQAEVEESQQVNAQEEEQEKMKQQGKQKLPRPVE) form a disordered region.

The protein belongs to the NDH complex subunit M family. In terms of assembly, part of the chloroplast NDH complex, composed of a mixture of chloroplast and nucleus encoded subunits. Component of the NDH subcomplex A, at least composed of ndhH, ndhI, ndhJ, ndhK, ndhL, ndhM, ndhN and ndhO.

The protein localises to the plastid. It localises to the chloroplast thylakoid membrane. It catalyses the reaction a plastoquinone + NADH + (n+1) H(+)(in) = a plastoquinol + NAD(+) + n H(+)(out). It carries out the reaction a plastoquinone + NADPH + (n+1) H(+)(in) = a plastoquinol + NADP(+) + n H(+)(out). NDH shuttles electrons from NAD(P)H:plastoquinone, via FMN and iron-sulfur (Fe-S) centers, to quinones in the photosynthetic chain and possibly in a chloroplast respiratory chain. The immediate electron acceptor for the enzyme in this species is believed to be plastoquinone. Couples the redox reaction to proton translocation, and thus conserves the redox energy in a proton gradient. This chain is NAD(P)H-quinone oxidoreductase subunit M, chloroplastic, found in Vitis vinifera (Grape).